We begin with the raw amino-acid sequence, 294 residues long: Beta-lactamase (294 aa).

The first 30 residues, 1-30, serve as a signal peptide directing secretion; the sequence is MKHSSLRRSLLLAGITLPLVSFALPAWANA. Ser75 acts as the Acyl-ester intermediate in catalysis. 239–241 contacts substrate; it reads KTG.

This sequence belongs to the class-A beta-lactamase family.

The catalysed reaction is a beta-lactam + H2O = a substituted beta-amino acid. This is Beta-lactamase (blaA) from Yersinia enterocolitica.